Consider the following 225-residue polypeptide: Urease accessory protein UreG (225 aa).

Residue 25–32 coordinates GTP; the sequence is GPVGAGKT.

Belongs to the SIMIBI class G3E GTPase family. UreG subfamily. As to quaternary structure, homodimer. UreD, UreF and UreG form a complex that acts as a GTP-hydrolysis-dependent molecular chaperone, activating the urease apoprotein by helping to assemble the nickel containing metallocenter of UreC. The UreE protein probably delivers the nickel.

It is found in the cytoplasm. Functionally, facilitates the functional incorporation of the urease nickel metallocenter. This process requires GTP hydrolysis, probably effectuated by UreG. The protein is Urease accessory protein UreG of Haemophilus influenzae (strain 86-028NP).